A 1066-amino-acid polypeptide reads, in one-letter code: Probable sucrose-phosphate synthase 4 (1066 aa).

Disordered regions lie at residues 132 to 166 and 688 to 714; these read YAAADMSEDLSEGEKGENINESSSTHDESTRGRMP and PRHPRWQKSDDATEVSEADSPGDSLRD. Residues 143-162 are compositionally biased toward basic and acidic residues; it reads EGEKGENINESSSTHDESTR.

The protein belongs to the glycosyltransferase 1 family. Homodimer or homotetramer. In terms of tissue distribution, expressed in germinating seeds.

It catalyses the reaction beta-D-fructose 6-phosphate + UDP-alpha-D-glucose = sucrose 6(F)-phosphate + UDP + H(+). The protein operates within glycan biosynthesis; sucrose biosynthesis; sucrose from D-fructose 6-phosphate and UDP-alpha-D-glucose: step 1/2. Its activity is regulated as follows. Activity is regulated by phosphorylation and moderated by concentration of metabolites and light. Functionally, plays a role in photosynthetic sucrose synthesis by catalyzing the rate-limiting step of sucrose biosynthesis from UDP-glucose and fructose- 6-phosphate. Involved in the regulation of carbon partitioning in the leaves of plants. May regulate the synthesis of sucrose and therefore play a major role as a limiting factor in the export of photoassimilates out of the leaf. Plays a role for sucrose availability that is essential for plant growth and fiber elongation. The chain is Probable sucrose-phosphate synthase 4 (SPS4) from Oryza sativa subsp. japonica (Rice).